A 526-amino-acid chain; its full sequence is Phosphoenolpyruvate carboxylase (526 aa).

Belongs to the PEPCase type 2 family. Homotetramer. It depends on Mg(2+) as a cofactor.

The catalysed reaction is oxaloacetate + phosphate = phosphoenolpyruvate + hydrogencarbonate. Its function is as follows. Catalyzes the irreversible beta-carboxylation of phosphoenolpyruvate (PEP) to form oxaloacetate (OAA), a four-carbon dicarboxylic acid source for the tricarboxylic acid cycle. This is Phosphoenolpyruvate carboxylase from Methanosarcina mazei (strain ATCC BAA-159 / DSM 3647 / Goe1 / Go1 / JCM 11833 / OCM 88) (Methanosarcina frisia).